A 159-amino-acid chain; its full sequence is ATP synthase subunit b', chloroplastic (159 aa).

A helical membrane pass occupies residues 30-47; that stretch reads LMALQFLALTIILNLIYY.

Belongs to the ATPase B chain family. In terms of assembly, F-type ATPases have 2 components, F(1) - the catalytic core - and F(0) - the membrane proton channel. F(1) has five subunits: alpha(3), beta(3), gamma(1), delta(1), epsilon(1). F(0) has four main subunits: a(1), b(1), b'(1) and c(10-14). The alpha and beta chains form an alternating ring which encloses part of the gamma chain. F(1) is attached to F(0) by a central stalk formed by the gamma and epsilon chains, while a peripheral stalk is formed by the delta, b and b' chains.

It is found in the plastid. The protein resides in the chloroplast thylakoid membrane. F(1)F(0) ATP synthase produces ATP from ADP in the presence of a proton or sodium gradient. F-type ATPases consist of two structural domains, F(1) containing the extramembraneous catalytic core and F(0) containing the membrane proton channel, linked together by a central stalk and a peripheral stalk. During catalysis, ATP synthesis in the catalytic domain of F(1) is coupled via a rotary mechanism of the central stalk subunits to proton translocation. Its function is as follows. Component of the F(0) channel, it forms part of the peripheral stalk, linking F(1) to F(0). The b'-subunit is a diverged and duplicated form of b found in plants and photosynthetic bacteria. The polypeptide is ATP synthase subunit b', chloroplastic (Antithamnion sp. (Red alga)).